The following is a 193-amino-acid chain: MNNLRNRLSGVNGKNKRVKEKEQKIWSEIGMIAGAFALLDVIIRGIMFEFPFKEWAASLVFLFIIILYYCIRAAASGMLMPRIDTKEELQKRVKQQRIESIAVAFAVVVLTMYDRGIPHTFFAWLKMILLFIVCGGVLFLLRYVIVKLAYRRAVKEEIKKKSSFLFGKRGKRSQFRAAFFIGTLICIHSAKLF.

This is an uncharacterized protein from Bacillus subtilis (strain 168).